We begin with the raw amino-acid sequence, 446 residues long: Citrate/sodium symporter (446 aa).

Residues 1 to 27 (MTNMSQPPATEKKGVSDLLGFKIFGMP) are Cytoplasmic-facing. The helical transmembrane segment at 28-44 (LPLYAFALITLLLSHFY) threads the bilayer. Residues 45–50 (NALPTD) are Periplasmic-facing. The chain crosses the membrane as a helical span at residues 51–71 (IVGGFAIMFIIGAIFGEIGKR). The Cytoplasmic portion of the chain corresponds to 72–80 (LPIFNKYIG). Residues 81 to 95 (GAPVMIFLVAAYFVY) traverse the membrane as a helical segment. Over 96-115 (AGIFTQKEIDAISNVMDKSN) the chain is Periplasmic. The chain crosses the membrane as a helical span at residues 116-130 (FLNLFIAVLITGAIL). Over 131 to 136 (SVNRRL) the chain is Cytoplasmic. Residues 137-166 (LLKSLLGYIPTILMGIVGASIFGIAIGLVF) form a helical membrane-spanning segment. Topologically, residues 167–181 (GIPVDRIMMLYVLPI) are periplasmic. Positions 181 and 183 each coordinate Na(+). The segment at residues 182–189 (MGGGNGAG) is an intramembrane region (helical). Residues asparagine 186 and glycine 187 each coordinate citrate. Residues 190–212 (AVPLSEIYHSVTGRSREEYYSTA) are Periplasmic-facing. A helical transmembrane segment spans residues 213–233 (IAILTIANIFAIVFAAVLDII). Residues 234–264 (GKKHTWLSGEGELVRKASFKVEEDEKTGQIT) lie on the Cytoplasmic side of the membrane. Residues 265–287 (HRETAVGLVLSTTCFLLAYVVAK) traverse the membrane as a helical segment. Over 288-299 (KILPSIGGVAIH) the chain is Periplasmic. Residues 300 to 315 (YFAWMVLIVAALNASG) form a helical membrane-spanning segment. Residues 316-327 (LCSPEIKAGAKR) lie on the Cytoplasmic side of the membrane. A helical membrane pass occupies residues 328 to 351 (LSDFFSKQLLWVLMVGVGVCYTDL). The Periplasmic segment spans residues 352–359 (QEIINAIT). A helical transmembrane segment spans residues 360–381 (FANVVIAAIIVIGAVLGAAIGG). The Cytoplasmic segment spans residues 382 to 398 (WLMGFFPIESAITAGLC). Na(+) contacts are provided by methionine 399 and asparagine 401. Residues 399–406 (MANRGGSG) constitute an intramembrane region (helical). Residues arginine 402, glycine 404, and serine 405 each coordinate citrate. The Cytoplasmic segment spans residues 407–416 (DLEVLSACNR). A helical membrane pass occupies residues 417-438 (MNLISYAQISSRLGGGIVLVIA). Arginine 428 provides a ligand contact to citrate. Residues 439-446 (SIVFGMMI) are Periplasmic-facing.

The protein belongs to the 2-hydroxycarboxylate transporter (2-HCT) (TC 2.A.24) family. Homodimer.

It is found in the cell inner membrane. It catalyses the reaction citrate(out) + 2 Na(+)(out) = citrate(in) + 2 Na(+)(in). With respect to regulation, in the absence of Na(+), transport is inhibited by the thiol reagents N-ethylmaleimide (NEM) and the methanethiosulfonate (MTS) derivatives MTSEA, MTSET and MTSES. However, inactivation by NEM, MTSES and MTSET is prevented by the presence of Na(+). In the absence of Na(+), the substrate citrate has no effect on the inactivation by permeable or impermeable thiol reagents. In contrast, when subsaturating concentrations of Na(+) are present, citrate significantly reduces inactivation, suggesting ordered binding of the substrate and co-ion; citrate is bound after Na(+). The membrane impermeable bulky maleimide AmdiS does not inactivate the transporter in right-side-out membrane vesicles. The apparent affinity for Na(+) decreases with increasing proton concentration. Protons cannot replace Na(+) in the translocation step but the decrease in apparent affinity for Na(+) towards lower pH suggests that protons can compete with Na(+) for the cation-binding sites. Its function is as follows. Secondary active transporter that catalyzes the uptake of citrate across the membrane with the concomitant uptake of sodium. There are conflicting data regarding exact substrate stoichiometry: the sodium/citrate stoichiometry was predicted to be 1, but the latest studies suggest that CitS transports citrate in symport with 2 sodium ions. Transports citrate as a divalent citrate anion, H-citrate(2-). Shows narrow substrate specificity and is very specific, transporting only citrate and to a low extent citromalate. Symport of Na(+) is absolutely required in the range pH 5-7 because no uptake can be detected in the absence of Na(+). Lithium can replace Na(+) in the symport reaction but it takes about a 200-fold higher concentration of Li(+) over Na(+) to achieve the same rate of uptake. The protein is Citrate/sodium symporter of Klebsiella pneumoniae.